The sequence spans 384 residues: Urea transporter 1 (384 aa).

A disordered region spans residues 1-23 (MDDNPTAVKLDQGGNQAPQGQGR). The next 5 membrane-spanning stretches (helical) occupy residues 61 to 81 (ISQV…VGLL), 85 to 105 (PWCA…ALLL), 111 to 131 (AITA…MAIY), 138 to 158 (FWWL…FSSA), and 168 to 188 (LPVF…ATGH). Asn206 carries N-linked (GlcNAc...) asparagine glycosylation. 3 helical membrane-spanning segments follow: residues 237–257 (GGIF…HAAI), 279–299 (GLWG…FMAL), and 327–347 (VVGL…FLLL).

It belongs to the urea transporter family. Homotrimer; each subunit contains a pore through which urea permeates. Identified in a complex with STOM.

It is found in the cell membrane. The protein resides in the basolateral cell membrane. It catalyses the reaction urea(in) = urea(out). Mediates the transport of urea driven by a concentration gradient across the cell membranes of erythrocytes and the renal inner medullary collecting duct which is critical to the urinary concentrating mechanism. Facilitates water transport in erythrocytes. The protein is Urea transporter 1 (SLC14A1) of Capra hircus (Goat).